The primary structure comprises 723 residues: Probable C-mannosyltransferase DPY19L4 (723 aa).

Residues 1–33 form a disordered region; the sequence is MAEEEGPPVELRQRKKPKSSENKESAKEEKISD. N-acetylalanine is present on alanine 2. Over residues 18–32 the composition is skewed to basic and acidic residues; the sequence is KSSENKESAKEEKIS. A run of 12 helical transmembrane segments spans residues 52–72, 161–178, 184–202, 222–240, 260–280, 292–310, 316–337, 349–370, 421–441, 466–486, 489–509, and 522–542; these read IFIGCLAAVTSGMMYALYLSA, VYFYIGIVFGLQGIYVTA, WLMSGTWLAGMLTVAWFVI, LPYFACQIAALTGYLKSNL, MMMWEYSHYLLFLQAISLFLL, YEVYKIYIFSLFLGYLLQF, LVSPLLSLVAALMLAKCLQLNV, VINFYLVCTLTITLNIIMKMFV, LLPFYILVLIICFLSMLQVIF, IIYHVIHTILLGSLAMVIEGL, IWIPYVCMLAAFGVCSPELWM, and PILLALILSMAVPTIIGLSLW.

The protein belongs to the dpy-19 family. Widely expressed.

Its subcellular location is the membrane. In terms of biological role, probable C-mannosyltransferase that mediates C-mannosylation of tryptophan residues on target proteins. The chain is Probable C-mannosyltransferase DPY19L4 (DPY19L4) from Homo sapiens (Human).